Reading from the N-terminus, the 693-residue chain is Glycine--tRNA ligase beta subunit (693 aa).

The protein belongs to the class-II aminoacyl-tRNA synthetase family. Tetramer of two alpha and two beta subunits.

The protein localises to the cytoplasm. The enzyme catalyses tRNA(Gly) + glycine + ATP = glycyl-tRNA(Gly) + AMP + diphosphate. The polypeptide is Glycine--tRNA ligase beta subunit (Ligilactobacillus salivarius (strain UCC118) (Lactobacillus salivarius)).